The primary structure comprises 214 residues: MTPAETRTPDHLTLALPKGRILEEAVTLLSRAGLPLTMPEKSRALRHEFPGVTLLELRNQDVPVYVDLGVADAGIVGKDVLLESGRQVYEPVDLRFAACRLSLIREVGAAGPVQRVGTKYPRATREYLNARGIPAEIVKLSGNIELAALTGLADAVVDLVQTGSTLRANNLEELDVLFHSTARLVVNRAALKLRRDRLRPLIEQLRELVQNEPA.

This sequence belongs to the ATP phosphoribosyltransferase family. Short subfamily. As to quaternary structure, heteromultimer composed of HisG and HisZ subunits.

It localises to the cytoplasm. It carries out the reaction 1-(5-phospho-beta-D-ribosyl)-ATP + diphosphate = 5-phospho-alpha-D-ribose 1-diphosphate + ATP. The protein operates within amino-acid biosynthesis; L-histidine biosynthesis; L-histidine from 5-phospho-alpha-D-ribose 1-diphosphate: step 1/9. Functionally, catalyzes the condensation of ATP and 5-phosphoribose 1-diphosphate to form N'-(5'-phosphoribosyl)-ATP (PR-ATP). Has a crucial role in the pathway because the rate of histidine biosynthesis seems to be controlled primarily by regulation of HisG enzymatic activity. The protein is ATP phosphoribosyltransferase of Deinococcus deserti (strain DSM 17065 / CIP 109153 / LMG 22923 / VCD115).